Here is a 1107-residue protein sequence, read N- to C-terminus: Copine family protein 1 (1107 aa).

The Extracellular portion of the chain corresponds to 1 to 22; the sequence is MVFDARLGYDPDEWEECPEPEH. A helical membrane pass occupies residues 23–45; the sequence is FLVFSGFTRYMLTFAAIAFVYYF. Residues 46-1107 are Cytoplasmic-facing; that stretch reads FKLLDDKNKK…IRREMMHNPL (1062 aa). Residues 67–124 adopt a coiled-coil conformation; that stretch reads VESVLAKAGDKLHDVKEQVQQHIPESAEELMREADQYLKEQAHSVQNNVHQFAEQAAN. The segment covering 478–488 has biased composition (low complexity); it reads QLQQNQQQHQQ. Disordered stretches follow at residues 478–501 and 673–698; these read QLQQ…TADS and HEPE…SRQV. Residues 492-501 are compositionally biased toward basic and acidic residues; sequence IDRRRTTADS. A compositionally biased stretch (polar residues) spans 687–698; it reads KNPSFEATSRQV. In terms of domain architecture, VWFA spans 863–1023; it reads NLIFGIDYTA…LSIIVVGVGD (161 aa).

The protein belongs to the copine family. As to quaternary structure, may interact (via VWFA domain) with unc-89 (via Ig-like C2-type 1-3) and unc-96 (via C-terminus); cpna-1 binding sites for unc-89 and unc-96 are different. May interact with pat-6. May interact with lim-9 (via LIM domains) and with scpl-1 (via FCP1 homology domain). In terms of tissue distribution, expressed in body wall muscles (at protein level).

It is found in the basal cell membrane. Its subcellular location is the cytoplasm. The protein resides in the myofibril. It localises to the sarcomere. The protein localises to the m line. Its function is as follows. Involved in the assembly of dense bodies and M lines during body wall muscle development. Acts by recruiting downstream of integrin-associated protein pat-6/actopaxin several dense bodies and M line components including unc-89, lim-9, scpl-1 and unc-96 to integrin-mediated attachment sites. The protein is Copine family protein 1 of Caenorhabditis elegans.